The following is a 435-amino-acid chain: Protein SUPPRESSOR OF K(+) TRANSPORT GROWTH DEFECT 1 (435 aa).

One can recognise an MIT domain in the interval glutamate 7–valine 72. The disordered stretch occupies residues leucine 73–lysine 113. A compositionally biased stretch (basic and acidic residues) spans lysine 95–lysine 113. ATP is bound at residue glycine 172–serine 179.

This sequence belongs to the AAA ATPase family. In terms of assembly, monomer or homodimer (in nucleotide-free form). Decamer, dodecamer or tetradecamer of two stacked respective homooligomeric rings (when bound to ATP); the dodecameric form seems to be predominant. Interacts with members of the ESCRT-III subcomplex such as LIP5, VPS60-1, VPS2.1, VPS20.1, VPS20.2, VPS24-1, VPS32.1, VPS32.2, CHMP1A and VPS24. Binds to PROS/At4g24370. In terms of tissue distribution, mostly expressed in leaves, to a lower extent in seeds, and barely in roots and flowers (at protein level). Particularly expressed in trichomes.

Its subcellular location is the cytoplasm. The protein resides in the nucleus. The protein localises to the endosome. It localises to the multivesicular body membrane. It is found in the prevacuolar compartment membrane. It carries out the reaction ATP + H2O = ADP + phosphate + H(+). With respect to regulation, activated by LIP5 and PROS. In terms of biological role, involved in the transport of biosynthetic membrane proteins from the prevacuolar/endosomal compartment to the vacuole. Required for multivesicular body (MVB) protein sorting. Catalyzes the ATP-dependent dissociation of class E VPS proteins from endosomal membranes, such as the disassembly of the ESCRT-III complex. May also regulate cell cycle. Required during seed development for the formation of mucilage in seed coat and testa. Involved in the maintenance of Na(+)/K(+) homeostasis under salt stress. Required for cell expansion. This Arabidopsis thaliana (Mouse-ear cress) protein is Protein SUPPRESSOR OF K(+) TRANSPORT GROWTH DEFECT 1.